The primary structure comprises 499 residues: Cytochrome P450 76T24 (499 aa).

A helical membrane pass occupies residues 3–23 (VDILLSLVLAFFGWAAIYFLT). Residues asparagine 55, asparagine 76, asparagine 279, and asparagine 284 are each glycosylated (N-linked (GlcNAc...) asparagine). Heme is bound at residue cysteine 442.

The protein belongs to the cytochrome P450 family.

It localises to the membrane. The chain is Cytochrome P450 76T24 from Catharanthus roseus (Madagascar periwinkle).